Reading from the N-terminus, the 483-residue chain is Probable cytosol aminopeptidase (483 aa).

2 residues coordinate Mn(2+): Lys-244 and Asp-249. The active site involves Lys-256. Mn(2+) is bound by residues Asp-267, Asp-326, and Glu-328. Arg-330 is a catalytic residue.

Belongs to the peptidase M17 family. Requires Mn(2+) as cofactor.

The protein localises to the cytoplasm. The enzyme catalyses Release of an N-terminal amino acid, Xaa-|-Yaa-, in which Xaa is preferably Leu, but may be other amino acids including Pro although not Arg or Lys, and Yaa may be Pro. Amino acid amides and methyl esters are also readily hydrolyzed, but rates on arylamides are exceedingly low.. It catalyses the reaction Release of an N-terminal amino acid, preferentially leucine, but not glutamic or aspartic acids.. Presumably involved in the processing and regular turnover of intracellular proteins. Catalyzes the removal of unsubstituted N-terminal amino acids from various peptides. This is Probable cytosol aminopeptidase from Campylobacter jejuni subsp. jejuni serotype O:2 (strain ATCC 700819 / NCTC 11168).